Consider the following 87-residue polypeptide: Chromosomal protein MC1b (87 aa).

In terms of biological role, protects DNA against thermal denaturation and modulates transcription. The polypeptide is Chromosomal protein MC1b (Methanothrix soehngenii (Methanosaeta concilii)).